The chain runs to 153 residues: Riboflavin synthase (153 aa).

Belongs to the DMRL synthase family. Homooligomer. Mg(2+) serves as cofactor.

It carries out the reaction 2 6,7-dimethyl-8-(1-D-ribityl)lumazine + H(+) = 5-amino-6-(D-ribitylamino)uracil + riboflavin. Its pathway is cofactor biosynthesis; riboflavin biosynthesis; riboflavin from 2-hydroxy-3-oxobutyl phosphate and 5-amino-6-(D-ribitylamino)uracil: step 2/2. Its activity is regulated as follows. Inhibited by EDTA. Its function is as follows. The relatively low activity of this enzyme suggested that 6,7-dimethyl-8-ribityllumazine might not be its natural substrate. This Methanothermobacter marburgensis (strain ATCC BAA-927 / DSM 2133 / JCM 14651 / NBRC 100331 / OCM 82 / Marburg) (Methanobacterium thermoautotrophicum) protein is Riboflavin synthase (ribC).